The chain runs to 232 residues: 5'-methylthioadenosine/S-adenosylhomocysteine nucleosidase (232 aa).

E12 serves as the catalytic Proton acceptor. Residues G78, I152, and 173 to 174 (ME) each bind substrate. Catalysis depends on D197, which acts as the Proton donor.

The protein belongs to the PNP/UDP phosphorylase family. MtnN subfamily. As to quaternary structure, homodimer.

It catalyses the reaction S-adenosyl-L-homocysteine + H2O = S-(5-deoxy-D-ribos-5-yl)-L-homocysteine + adenine. It carries out the reaction S-methyl-5'-thioadenosine + H2O = 5-(methylsulfanyl)-D-ribose + adenine. The enzyme catalyses 5'-deoxyadenosine + H2O = 5-deoxy-D-ribose + adenine. It functions in the pathway amino-acid biosynthesis; L-methionine biosynthesis via salvage pathway; S-methyl-5-thio-alpha-D-ribose 1-phosphate from S-methyl-5'-thioadenosine (hydrolase route): step 1/2. Functionally, catalyzes the irreversible cleavage of the glycosidic bond in both 5'-methylthioadenosine (MTA) and S-adenosylhomocysteine (SAH/AdoHcy) to adenine and the corresponding thioribose, 5'-methylthioribose and S-ribosylhomocysteine, respectively. Also cleaves 5'-deoxyadenosine, a toxic by-product of radical S-adenosylmethionine (SAM) enzymes, into 5-deoxyribose and adenine. Thus, is required for in vivo function of the radical SAM enzymes biotin synthase and lipoic acid synthase, that are inhibited by 5'-deoxyadenosine accumulation. The protein is 5'-methylthioadenosine/S-adenosylhomocysteine nucleosidase of Salmonella enteritidis PT4 (strain P125109).